The primary structure comprises 78 residues: MAKVPVRKPKKKQNPLKAAKIEAVDYKDTALLRKFISDRGKIRARRVTGVSVQEQRQIAKAIKNAREMALLPYSSSAR.

The protein belongs to the bacterial ribosomal protein bS18 family. Part of the 30S ribosomal subunit. Forms a tight heterodimer with protein bS6.

Its function is as follows. Binds as a heterodimer with protein bS6 to the central domain of the 16S rRNA, where it helps stabilize the platform of the 30S subunit. In Kineococcus radiotolerans (strain ATCC BAA-149 / DSM 14245 / SRS30216), this protein is Small ribosomal subunit protein bS18.